The primary structure comprises 293 residues: MVRRQSAPRLEFEAAAIYEYPEHLRPFLSEAPALPGVYIFHSESDTLPLYIGKSVNIRSRVLSHLRTPDEATMLRQARRISWICTAGEMGALLLEARLIKEQQPLFNKRLRRNRQLCSLQLSEQKIEVVSARSVDFSHEPNLFGLFANRRAALQSLQNLADEQKLCYGLLGLEPVSRGRACFRFALKRCAGACCGQETPQAHFLRLQASLERLRVVCWPWKGAIALKESRPQMTQFHIINNWLWLGAVPSLDEAATLVRTPAGFDQDGYKILCKPLMSGQYEIIELHTDCRQS.

In terms of domain architecture, GIY-YIG spans 33 to 108; the sequence is ALPGVYIFHS…IKEQQPLFNK (76 aa).

Functionally, incises the DNA at the 3' side of a lesion during nucleotide excision repair. Incises the DNA farther away from the lesion than UvrC. Not able to incise the 5' site of a lesion. When a lesion remains because UvrC is not able to induce the 3' incision, Cho incises the DNA. Then UvrC makes the 5' incision. The combined action of Cho and UvrC broadens the substrate range of nucleotide excision repair. In Salmonella typhimurium (strain LT2 / SGSC1412 / ATCC 700720), this protein is Excinuclease cho (cho).